The sequence spans 305 residues: Glycine--tRNA ligase alpha subunit (305 aa).

It belongs to the class-II aminoacyl-tRNA synthetase family. Tetramer of two alpha and two beta subunits.

The protein localises to the cytoplasm. The enzyme catalyses tRNA(Gly) + glycine + ATP = glycyl-tRNA(Gly) + AMP + diphosphate. This Streptococcus pneumoniae (strain 70585) protein is Glycine--tRNA ligase alpha subunit.